A 448-amino-acid chain; its full sequence is Probable glycine dehydrogenase (decarboxylating) subunit 1 (448 aa).

Belongs to the GcvP family. N-terminal subunit subfamily. As to quaternary structure, the glycine cleavage system is composed of four proteins: P, T, L and H. In this organism, the P 'protein' is a heterodimer of two subunits.

The catalysed reaction is N(6)-[(R)-lipoyl]-L-lysyl-[glycine-cleavage complex H protein] + glycine + H(+) = N(6)-[(R)-S(8)-aminomethyldihydrolipoyl]-L-lysyl-[glycine-cleavage complex H protein] + CO2. Functionally, the glycine cleavage system catalyzes the degradation of glycine. The P protein binds the alpha-amino group of glycine through its pyridoxal phosphate cofactor; CO(2) is released and the remaining methylamine moiety is then transferred to the lipoamide cofactor of the H protein. In Rhodospirillum rubrum (strain ATCC 11170 / ATH 1.1.1 / DSM 467 / LMG 4362 / NCIMB 8255 / S1), this protein is Probable glycine dehydrogenase (decarboxylating) subunit 1.